Consider the following 351-residue polypeptide: DNA polymerase IV (351 aa).

A UmuC domain is found at 4–185 (IIHVDMDCFF…LPLAKIPGVG (182 aa)). The Mg(2+) site is built by D8 and D103. E104 is a catalytic residue.

This sequence belongs to the DNA polymerase type-Y family. As to quaternary structure, monomer. The cofactor is Mg(2+).

It localises to the cytoplasm. The enzyme catalyses DNA(n) + a 2'-deoxyribonucleoside 5'-triphosphate = DNA(n+1) + diphosphate. Poorly processive, error-prone DNA polymerase involved in untargeted mutagenesis. Copies undamaged DNA at stalled replication forks, which arise in vivo from mismatched or misaligned primer ends. These misaligned primers can be extended by PolIV. Exhibits no 3'-5' exonuclease (proofreading) activity. May be involved in translesional synthesis, in conjunction with the beta clamp from PolIII. The protein is DNA polymerase IV of Escherichia coli (strain ATCC 8739 / DSM 1576 / NBRC 3972 / NCIMB 8545 / WDCM 00012 / Crooks).